The sequence spans 83 residues: uncharacterized protein (83 aa).

A helical transmembrane segment spans residues 58–78 (AVLLWIAIIATLGNIVVVGVV).

Its subcellular location is the membrane. This is an uncharacterized protein from Homo sapiens (Human).